We begin with the raw amino-acid sequence, 150 residues long: Peptide deformylase 2 (150 aa).

Cys-89 and His-131 together coordinate Fe cation. The active site involves Glu-132. His-135 contacts Fe cation.

This sequence belongs to the polypeptide deformylase family. Fe(2+) serves as cofactor.

The catalysed reaction is N-terminal N-formyl-L-methionyl-[peptide] + H2O = N-terminal L-methionyl-[peptide] + formate. In terms of biological role, removes the formyl group from the N-terminal Met of newly synthesized proteins. Requires at least a dipeptide for an efficient rate of reaction. N-terminal L-methionine is a prerequisite for activity but the enzyme has broad specificity at other positions. This Clostridium acetobutylicum (strain ATCC 824 / DSM 792 / JCM 1419 / IAM 19013 / LMG 5710 / NBRC 13948 / NRRL B-527 / VKM B-1787 / 2291 / W) protein is Peptide deformylase 2.